Here is a 309-residue protein sequence, read N- to C-terminus: Ubiquitin domain-containing protein UBFD1 (309 aa).

Residues 1–80 form a disordered region; that stretch reads MAAAGAPDGM…VSNGEDAGGG (80 aa). Over residues 9 to 19 the composition is skewed to acidic residues; sequence GMEEPGMDTEA. Over residues 35 to 57 the composition is skewed to low complexity; it reads EAEAAAGAAAEDSGAARGSLQPA. In terms of domain architecture, Ubiquitin-like spans 84 to 159; that stretch reads ELVDLKIIWN…IMVVGSTIND (76 aa). The disordered stretch occupies residues 171 to 204; sequence QQDAKAEENKKEPLCRQKQHRKVLDKGKPEDVMP. 2 stretches are compositionally biased toward basic and acidic residues: residues 174–185 and 192–201; these read AKAEENKKEPLC and KVLDKGKPED.

In terms of assembly, binds polyubiquitin.

Functionally, may play a role as NF-kappa-B regulator. The polypeptide is Ubiquitin domain-containing protein UBFD1 (UBFD1) (Homo sapiens (Human)).